The following is a 591-amino-acid chain: Parathyroid hormone/parathyroid hormone-related peptide receptor (591 aa).

The first 26 residues, 1 to 26 (MGTARIAPSLALLLCCPVLSSAYALV), serve as a signal peptide directing secretion. Topologically, residues 27-188 (DADDVFTKEE…REREVFDRLG (162 aa)) are extracellular. Disulfide bonds link C48/C117, C108/C148, and C131/C170. The segment at 67–104 (KGWTPASTSGKPRKEKAPGKFYPESKENKDVPTGSRRR) is disordered. Positions 81 to 96 (EKAPGKFYPESKENKD) are enriched in basic and acidic residues. N-linked (GlcNAc...) asparagine glycosylation is found at N151, N161, N166, and N176. A helical transmembrane segment spans residues 189-212 (MIYTVGYSMSLASLTVAVLILAYF). Residues 213–219 (RRLHCTR) are Cytoplasmic-facing. The helical transmembrane segment at 220-239 (NYIHMHMFLSFMLRAASIFV) threads the bilayer. Residues 240 to 282 (KDAVLYSGFTLDEAERLTEEELHIIAQVPPPPAAAAVGYAGCR) lie on the Extracellular side of the membrane. The helical transmembrane segment at 283–306 (VAVTFFLYFLATNYYWILVEGLYL) threads the bilayer. Residues 307-320 (HSLIFMAFFSEKKY) are Cytoplasmic-facing. The helical transmembrane segment at 321–342 (LWGFTIFGWGLPAVFVAVWVGV) threads the bilayer. Residues 343-361 (RATLANTGCWDLSSGHKKW) lie on the Extracellular side of the membrane. A helical transmembrane segment spans residues 362–382 (IIQVPILASVVLNFILFINII). The Cytoplasmic portion of the chain corresponds to 383-409 (RVLATKLRETNAGRCDTRQQYRKLLRS). The chain crosses the membrane as a helical span at residues 410–428 (TLVLVPLFGVHYTVFMALP). Over 429 to 440 (YTEVSGTLWQIQ) the chain is Extracellular. A helical transmembrane segment spans residues 441-463 (MHYEMLFNSFQGFFVAIIYCFCN). Residues 464–591 (GEVQAEIRKS…LLQEEWETVM (128 aa)) are Cytoplasmic-facing. The Important for interaction with G proteins signature appears at 474–477 (WSRW).

This sequence belongs to the G-protein coupled receptor 2 family. Homodimer in the absence of bound ligand. Peptide hormone binding leads to dissociation of the homodimer. Post-translationally, N-glycosylated. In terms of tissue distribution, detected in kidney.

The protein resides in the cell membrane. Its function is as follows. G-protein-coupled receptor for parathyroid hormone (PTH) and for parathyroid hormone-related peptide (PTHLH). Ligand binding causes a conformation change that triggers signaling via guanine nucleotide-binding proteins (G proteins) and modulates the activity of downstream effectors, such as adenylate cyclase (cAMP). PTH1R is coupled to G(s) G alpha proteins and mediates activation of adenylate cyclase activity. PTHLH dissociates from PTH1R more rapidly than PTH; as consequence, the cAMP response induced by PTHLH decays faster than the response induced by PTH. In Mus musculus (Mouse), this protein is Parathyroid hormone/parathyroid hormone-related peptide receptor (Pth1r).